We begin with the raw amino-acid sequence, 298 residues long: 33 kDa chaperonin (298 aa).

Disulfide bonds link Cys239-Cys241 and Cys272-Cys275.

Belongs to the HSP33 family. In terms of processing, under oxidizing conditions two disulfide bonds are formed involving the reactive cysteines. Under reducing conditions zinc is bound to the reactive cysteines and the protein is inactive.

It is found in the cytoplasm. Functionally, redox regulated molecular chaperone. Protects both thermally unfolding and oxidatively damaged proteins from irreversible aggregation. Plays an important role in the bacterial defense system toward oxidative stress. This is 33 kDa chaperonin from Picosynechococcus sp. (strain ATCC 27264 / PCC 7002 / PR-6) (Agmenellum quadruplicatum).